Reading from the N-terminus, the 450-residue chain is tRNA-aminoacylation cofactor arc1 (450 aa).

The tract at residues 208–278 (QRPSVIKKDK…KEPPKAATPV (71 aa)) is disordered. Basic and acidic residues-rich tracts occupy residues 213–225 (IKKD…EGKP) and 233–247 (SVEK…AKKE). The span at 248 to 261 (KQNKKEKKDKKDKK) shows a compositional bias: basic residues. The segment covering 262–272 (DKKEKAPKEPP) has biased composition (basic and acidic residues). Positions 278-382 (VPSMIDFRIG…ENAEIGDRLT (105 aa)) constitute a tRNA-binding domain.

This sequence belongs to the tRNA-aminoacylation cofactor ARC1 family. Component of a yeast aminoacyl-tRNA synthase (aaRS) complex formed by methionyl-tRNA synthase, glutamyl-tRNA synthase and the tRNA aminoacylation cofactor arc1 in a stoichiometric complex. Interacts with rar1/mes1 and gus1.

It localises to the cytoplasm. Binds to tRNA and functions as a cofactor for the methionyl-tRNA synthetase (MetRS) and glutamyl-tRNA synthetase (GluRS). Forms a complex with MetRS and GluRS and increases their affinity for cognate tRNAs due to the presence of a tRNA binding domain in its middle and C-terminal part. In Schizosaccharomyces pombe (strain 972 / ATCC 24843) (Fission yeast), this protein is tRNA-aminoacylation cofactor arc1.